The chain runs to 346 residues: tRNA N6-adenosine threonylcarbamoyltransferase (346 aa).

Fe cation contacts are provided by His-111 and His-115. Substrate is bound by residues 134 to 138 (LVSGG), Asp-167, Gly-180, and Asn-279. Residue Asp-307 coordinates Fe cation.

The protein belongs to the KAE1 / TsaD family. Requires Fe(2+) as cofactor.

The protein resides in the cytoplasm. It catalyses the reaction L-threonylcarbamoyladenylate + adenosine(37) in tRNA = N(6)-L-threonylcarbamoyladenosine(37) in tRNA + AMP + H(+). Required for the formation of a threonylcarbamoyl group on adenosine at position 37 (t(6)A37) in tRNAs that read codons beginning with adenine. Is involved in the transfer of the threonylcarbamoyl moiety of threonylcarbamoyl-AMP (TC-AMP) to the N6 group of A37, together with TsaE and TsaB. TsaD likely plays a direct catalytic role in this reaction. This chain is tRNA N6-adenosine threonylcarbamoyltransferase, found in Burkholderia lata (strain ATCC 17760 / DSM 23089 / LMG 22485 / NCIMB 9086 / R18194 / 383).